The primary structure comprises 535 residues: CTP synthase (535 aa).

The tract at residues 1-268 (MSTKYIFVTG…DQIVCDHLKL (268 aa)) is amidoligase domain. Serine 14 lines the CTP pocket. UTP is bound at residue serine 14. 15–20 (SMGKGI) contacts ATP. Residue tyrosine 55 participates in L-glutamine binding. Aspartate 72 contributes to the ATP binding site. Mg(2+) is bound by residues aspartate 72 and glutamate 142. Residues 149 to 151 (DME), 189 to 194 (KTKIAQ), and lysine 225 each bind CTP. Residues 189–194 (KTKIAQ) and lysine 225 each bind UTP. Valine 243 lines the ATP pocket. Residues 293 to 535 (KIALVGKYVE…FIRVAVENSK (243 aa)) enclose the Glutamine amidotransferase type-1 domain. Glycine 355 lines the L-glutamine pocket. Cysteine 382 functions as the Nucleophile; for glutamine hydrolysis in the catalytic mechanism. Residues 383 to 386 (LGMQ), glutamate 406, and arginine 464 contribute to the L-glutamine site. Active-site residues include histidine 509 and glutamate 511.

The protein belongs to the CTP synthase family. In terms of assembly, homotetramer. In contrast to E.coli CTP synthase, remains a tetramer at dilute enzyme concentrations even in the absence of Mg(2+), ATP and UTP.

It catalyses the reaction UTP + L-glutamine + ATP + H2O = CTP + L-glutamate + ADP + phosphate + 2 H(+). It carries out the reaction L-glutamine + H2O = L-glutamate + NH4(+). The catalysed reaction is UTP + NH4(+) + ATP = CTP + ADP + phosphate + 2 H(+). The protein operates within pyrimidine metabolism; CTP biosynthesis via de novo pathway; CTP from UDP: step 2/2. Its activity is regulated as follows. Allosterically activated by GTP, when glutamine is the substrate. GTP has no effect on the reaction when ammonia is the substrate. The allosteric effector GTP functions by stabilizing the protein conformation that binds the tetrahedral intermediate(s) formed during glutamine hydrolysis. Also activated by magnesium. Allosterically inhibited by CTP. Its function is as follows. Catalyzes the ATP-dependent amination of UTP to CTP with either L-glutamine or ammonia as the source of nitrogen. Is essential for the synthesis of CTP de novo. Contrary to other bacterial CTP synthases, the lactococcal enzyme is also able to convert dUTP to dCTP, but this reaction may not play a significant physiological role. Regulates intracellular CTP levels through interactions with the four ribonucleotide triphosphates. In Lactococcus lactis subsp. cremoris (strain MG1363), this protein is CTP synthase.